We begin with the raw amino-acid sequence, 355 residues long: Chromosomal protein D1 (355 aa).

The residue at position 1 (methionine 1) is an N-acetylmethionine. A disordered region spans residues 1 to 355 (MEEVAVKKRG…NYNDSESVAA (355 aa)). The segment at residues 7 to 14 (KKRGRPSK) is a DNA-binding region (a.T hook 1). At serine 30 the chain carries Phosphoserine. DNA-binding regions (a.T hook) lie at residues 34–41 (KKRGRPAK) and 60–67 (KIQNDEDP). Residues 64–77 (DEDPEDEGEEDGDG) show a composition bias toward acidic residues. Serine 80, serine 88, and serine 89 each carry phosphoserine. A DNA-binding region (a.T hook 4) is located at residues 94 to 101 (KGRGRPKS). A phosphoserine mark is found at serine 107, serine 109, and serine 112. Phosphothreonine is present on threonine 115. The residue at position 118 (serine 118) is a Phosphoserine. Over residues 119 to 130 (AKKRKAGRPKKH) the composition is skewed to basic residues. Positions 122–129 (RKAGRPKK) form a DNA-binding region, a.T hook 5. 2 positions are modified to phosphoserine; by CK2: serine 133 and serine 135. A compositionally biased stretch (acidic residues) spans 135–147 (SENEDDQDEDDDG). Phosphoserine occurs at positions 149, 150, 161, 164, and 170. Residues 155–162 (RPVGRPSA) constitute a DNA-binding region (a.T hook 6). Positions 174–181 (RGLGRPKK) form a DNA-binding region, a.T hook 7. Phosphoserine; by CK2 is present on serine 186. The segment at residues 196-203 (KKRGRPPQ) is a DNA-binding region (a.T hook 8). Serine 208 is subject to Phosphoserine. A DNA-binding region (a.T hook 9) is located at residues 219 to 226 (RPRGRPKA). The segment covering 237–247 (NDDDQDDENSG) has biased composition (acidic residues). 3 positions are modified to phosphoserine: serine 246, serine 252, and serine 253. 2 DNA-binding regions (a.T hook) span residues 262-269 (KKRGRPSL) and 281-288 (KPRSRPAK). Phosphoserine occurs at positions 299 and 307. Residues 307 to 318 (SKKESNDEDRAV) show a composition bias toward basic and acidic residues. Serine 311 bears the Phosphoserine; by CK2 mark. Threonine 321 is subject to Phosphothreonine. Position 332 is a phosphoserine; by CK2 (serine 332). Over residues 345–355 (DNYNDSESVAA) the composition is skewed to polar residues.

It is found in the nucleus. It localises to the chromosome. This satellite DNA-associated protein is a double-stranded DNA binding protein specific for tracts of pure at DNA. It may play a role in organizing the higher-order structure of euchromatin as well as heterochromatin. The sequence is that of Chromosomal protein D1 (D1) from Drosophila melanogaster (Fruit fly).